A 168-amino-acid chain; its full sequence is Large ribosomal subunit protein uL10 (168 aa).

Belongs to the universal ribosomal protein uL10 family. In terms of assembly, part of the ribosomal stalk of the 50S ribosomal subunit. The N-terminus interacts with L11 and the large rRNA to form the base of the stalk. The C-terminus forms an elongated spine to which L12 dimers bind in a sequential fashion forming a multimeric L10(L12)X complex.

In terms of biological role, forms part of the ribosomal stalk, playing a central role in the interaction of the ribosome with GTP-bound translation factors. In Mycoplasmopsis pulmonis (strain UAB CTIP) (Mycoplasma pulmonis), this protein is Large ribosomal subunit protein uL10 (rplJ).